The sequence spans 434 residues: Glutamyl-tRNA reductase (434 aa).

Residues 49-52 (TCNR), S114, 119-121 (EPQ), and Q125 each bind substrate. The Nucleophile role is filled by C50. 199-204 (GAGETI) contributes to the NADP(+) binding site.

This sequence belongs to the glutamyl-tRNA reductase family. As to quaternary structure, homodimer.

The enzyme catalyses (S)-4-amino-5-oxopentanoate + tRNA(Glu) + NADP(+) = L-glutamyl-tRNA(Glu) + NADPH + H(+). The protein operates within porphyrin-containing compound metabolism; protoporphyrin-IX biosynthesis; 5-aminolevulinate from L-glutamyl-tRNA(Glu): step 1/2. Catalyzes the NADPH-dependent reduction of glutamyl-tRNA(Glu) to glutamate 1-semialdehyde (GSA). This is Glutamyl-tRNA reductase from Pasteurella multocida (strain Pm70).